A 1396-amino-acid polypeptide reads, in one-letter code: DNA-directed RNA polymerase subunit beta' (1396 aa).

Residues C73, C75, C88, and C91 each coordinate Zn(2+). Positions 467, 469, and 471 each coordinate Mg(2+). The Zn(2+) site is built by C817, C891, C898, and C901.

Belongs to the RNA polymerase beta' chain family. As to quaternary structure, the RNAP catalytic core consists of 2 alpha, 1 beta, 1 beta' and 1 omega subunit. When a sigma factor is associated with the core the holoenzyme is formed, which can initiate transcription. Mg(2+) serves as cofactor. It depends on Zn(2+) as a cofactor.

The catalysed reaction is RNA(n) + a ribonucleoside 5'-triphosphate = RNA(n+1) + diphosphate. DNA-dependent RNA polymerase catalyzes the transcription of DNA into RNA using the four ribonucleoside triphosphates as substrates. In Orientia tsutsugamushi (strain Ikeda) (Rickettsia tsutsugamushi), this protein is DNA-directed RNA polymerase subunit beta'.